A 218-amino-acid polypeptide reads, in one-letter code: Telomere repeats-binding bouquet formation protein 2 (218 aa).

Residues 117–143 (HDRMASSDKENIRPTPEHKQELSKSAE) form a disordered region.

Belongs to the TERB2 family. Component of the MAJIN-TERB1-TERB2 complex, composed of MAJIN, TERB1 and TERB2. In terms of tissue distribution, specifically expressed in germline tissues.

It localises to the chromosome. The protein localises to the telomere. It is found in the nucleus inner membrane. Meiosis-specific telomere-associated protein involved in meiotic telomere attachment to the nucleus inner membrane, a crucial step for homologous pairing and synapsis. Component of the MAJIN-TERB1-TERB2 complex, which promotes telomere cap exchange by mediating attachment of telomeric DNA to the inner nuclear membrane and replacement of the protective cap of telomeric chromosomes: in early meiosis, the MAJIN-TERB1-TERB2 complex associates with telomeric DNA and the shelterin/telosome complex. During prophase, the complex matures and promotes release of the shelterin/telosome complex from telomeric DNA. In Mus musculus (Mouse), this protein is Telomere repeats-binding bouquet formation protein 2.